The primary structure comprises 523 residues: 2-hydroxyisoflavanone synthase (523 aa).

Residues 2–22 (LVELAITLLVIALFIHLRPTL) traverse the membrane as a helical segment. Cys-450 is a heme binding site.

It belongs to the cytochrome P450 family. Requires heme as cofactor.

It is found in the microsome membrane. It catalyses the reaction (2S)-liquiritigenin + reduced [NADPH--hemoprotein reductase] + O2 = (2R,3S)-2,4',7-trihydroxyisoflavanone + oxidized [NADPH--hemoprotein reductase] + H2O + H(+). The catalysed reaction is (2S)-naringenin + reduced [NADPH--hemoprotein reductase] + O2 = 2-hydroxy-2,3-dihydrogenistein + oxidized [NADPH--hemoprotein reductase] + H2O + H(+). Functionally, 2-hydroxyisoflavanone synthase, which catalyzes the hydroxylation associated with 1,2-aryl migration of flavanones. Converts liquiritigenin and naringenin into highly unstable precursors of the isoflavones daidzein and genistein. Acts only on substrates with (2S)-chirality. This Glycyrrhiza echinata (Licorice) protein is 2-hydroxyisoflavanone synthase (CYP93C2).